Here is a 570-residue protein sequence, read N- to C-terminus: Endo-1,4-beta-xylanase 5-like (570 aa).

The first 23 residues, Met1–Gly23, serve as a signal peptide directing secretion. N-linked (GlcNAc...) asparagine glycans are attached at residues Asn197, Asn261, and Asn307. Positions Lys202–Leu501 constitute a GH10 domain. Glu332 (proton donor) is an active-site residue. A glycan (N-linked (GlcNAc...) asparagine) is linked at Asn346. Glu439 serves as the catalytic Nucleophile. Residues Asn490, Asn515, Asn537, and Asn545 are each glycosylated (N-linked (GlcNAc...) asparagine).

This sequence belongs to the glycosyl hydrolase 10 (cellulase F) family.

It catalyses the reaction Endohydrolysis of (1-&gt;4)-beta-D-xylosidic linkages in xylans.. Its pathway is glycan degradation; xylan degradation. Binds to and hydrolyzes insoluble and soluble xylan substrates. The chain is Endo-1,4-beta-xylanase 5-like from Arabidopsis thaliana (Mouse-ear cress).